A 233-amino-acid polypeptide reads, in one-letter code: Ribonuclease 3 (233 aa).

Positions 9–136 constitute an RNase III domain; sequence LQHFWEQFHL…IIGSVYLSGG (128 aa). Position 49 (glutamate 49) interacts with Mg(2+). Aspartate 53 is an active-site residue. Mg(2+) contacts are provided by aspartate 122 and glutamate 125. Glutamate 125 is an active-site residue. A DRBM domain is found at 162–231; it reads DSKSALQEFV…ARAALALLKV (70 aa).

It belongs to the ribonuclease III family. As to quaternary structure, homodimer. Mg(2+) serves as cofactor.

Its subcellular location is the cytoplasm. The catalysed reaction is Endonucleolytic cleavage to 5'-phosphomonoester.. Digests double-stranded RNA. Involved in the processing of primary rRNA transcript to yield the immediate precursors to the large and small rRNAs (23S and 16S). Processes some mRNAs, and tRNAs when they are encoded in the rRNA operon. Processes pre-crRNA and tracrRNA of type II CRISPR loci if present in the organism. In Moorella thermoacetica (strain ATCC 39073 / JCM 9320), this protein is Ribonuclease 3.